Here is a 101-residue protein sequence, read N- to C-terminus: Urease subunit beta (101 aa).

It belongs to the urease beta subunit family. Heterotrimer of UreA (gamma), UreB (beta) and UreC (alpha) subunits. Three heterotrimers associate to form the active enzyme.

Its subcellular location is the cytoplasm. The enzyme catalyses urea + 2 H2O + H(+) = hydrogencarbonate + 2 NH4(+). Its pathway is nitrogen metabolism; urea degradation; CO(2) and NH(3) from urea (urease route): step 1/1. The sequence is that of Urease subunit beta from Ralstonia pickettii (strain 12J).